A 1938-amino-acid chain; its full sequence is Myosin-1 (1938 aa).

The tract at residues 1-27 (MSLEHEKDPGWQYLKRSREQQLADQSR) is disordered. Basic and acidic residues predominate over residues 16 to 27 (RSREQQLADQSR). One can recognise a Myosin N-terminal SH3-like domain in the interval 30-80 (DSKKNVWIPDAEEGYIEGVIKGPGPKADTVIVTAGGKDVTLKKDIVQEVNP). In terms of domain architecture, Myosin motor spans 84 to 785 (EKTEDMSNLT…VVAHIEDLRD (702 aa)). An N6,N6,N6-trimethyllysine modification is found at lysine 128. Position 177-184 (177-184 (GESGAGKT)) interacts with ATP. Actin-binding regions lie at residues 660–682 (LNKLMTMLHKTHPHFIRCIIPNE) and 764–778 (RIGHTKVFFKAGVVA). Positions 846–1170 (QLKCGKMAEE…NKQLEIQQDN (325 aa)) are alpha-helical tailpiece (short S2). The rodlike tail (S2 and LMM domains) stretch occupies residues 846-1938 (QLKCGKMAEE…GQVVRSATNK (1093 aa)). A coiled-coil region spans residues 846–1938 (QLKCGKMAEE…GQVVRSATNK (1093 aa)). Positions 919-951 (RQEVEKSLNDANDRLSEHEEKNADLEKQRRKAQ) are disordered. Basic and acidic residues predominate over residues 920–951 (QEVEKSLNDANDRLSEHEEKNADLEKQRRKAQ). The light meromyosin (LMM) stretch occupies residues 1171 to 1938 (NKKKDSEIIK…GQVVRSATNK (768 aa)).

The protein belongs to the TRAFAC class myosin-kinesin ATPase superfamily. Myosin family. As to quaternary structure, muscle myosin is a hexameric protein that consists of 2 heavy chain subunits (MHC), 2 alkali light chain subunits (MLC) and 2 regulatory light chain subunits (MLC-2). Interacts with itr-1 (via c-terminal coiled coil domain). Found exclusively in the pharyngeal muscle.

Its subcellular location is the cytoplasm. The protein localises to the myofibril. Functionally, muscle contraction. The sequence is that of Myosin-1 from Caenorhabditis elegans.